The following is a 73-amino-acid chain: UPF0352 protein HD_1515 (73 aa).

Belongs to the UPF0352 family.

The polypeptide is UPF0352 protein HD_1515 (Haemophilus ducreyi (strain 35000HP / ATCC 700724)).